Reading from the N-terminus, the 156-residue chain is Small ribosomal subunit protein uS7 (156 aa).

Belongs to the universal ribosomal protein uS7 family. In terms of assembly, part of the 30S ribosomal subunit. Contacts proteins S9 and S11.

One of the primary rRNA binding proteins, it binds directly to 16S rRNA where it nucleates assembly of the head domain of the 30S subunit. Is located at the subunit interface close to the decoding center, probably blocks exit of the E-site tRNA. The protein is Small ribosomal subunit protein uS7 of Rhodococcus opacus (strain B4).